A 406-amino-acid polypeptide reads, in one-letter code: MTFSVDKVRADFPVLSREVNGLPLAYLDSAASAQKPSQVIDSEAEFYRHGYAAVHRGIHTLSAQATEKMENVRKRASLFINARSAEELVFVRGTTEGINLVANSWGNSNVRAGDNIIISQMEHHANIVPWQMLCARVGAELRVIPLNPDGTLQLETLPNLFDEKTRLLAITHVSNVLGTENPLAEMITLAHQHGAKVLVDGAQAVMHHPVDVQALDCDFYVFSGHKLYGPTGIGILYVKEALLQEMPPWEGGGSMIATVSLSEGTTWTKAPWRFEAGTPNTGGIIGLGAALEYVSALGLNNIAEYEQNLMHYALSQLESVPDLTLYGPRNRLGVIAFNLGKHHAYDVGSFLDNYGIAVRTGHHCAMPLMAYYNVPAMCRASLAMYNTHEEVDRLVTGLQRIHRLLG.

Lysine 226 is subject to N6-(pyridoxal phosphate)lysine. Cysteine 364 functions as the Cysteine persulfide intermediate in the catalytic mechanism.

It belongs to the class-V pyridoxal-phosphate-dependent aminotransferase family. Csd subfamily. In terms of assembly, homodimer. Interacts with SufE and the SufBCD complex composed of SufB, SufC and SufD. The interaction with SufE is required to mediate the direct transfer of the sulfur atom from the S-sulfanylcysteine. Pyridoxal 5'-phosphate serves as cofactor.

The protein localises to the cytoplasm. The enzyme catalyses (sulfur carrier)-H + L-cysteine = (sulfur carrier)-SH + L-alanine. It catalyses the reaction L-selenocysteine + AH2 = hydrogenselenide + L-alanine + A + H(+). Its pathway is cofactor biosynthesis; iron-sulfur cluster biosynthesis. Functionally, cysteine desulfurases mobilize the sulfur from L-cysteine to yield L-alanine, an essential step in sulfur metabolism for biosynthesis of a variety of sulfur-containing biomolecules. Component of the suf operon, which is activated and required under specific conditions such as oxidative stress and iron limitation. Acts as a potent selenocysteine lyase in vitro, that mobilizes selenium from L-selenocysteine. Selenocysteine lyase activity is however unsure in vivo. This chain is Cysteine desulfurase, found in Escherichia coli O8 (strain IAI1).